Here is a 388-residue protein sequence, read N- to C-terminus: Lipid-A-disaccharide synthase (388 aa).

Belongs to the LpxB family.

It carries out the reaction a lipid X + a UDP-2-N,3-O-bis[(3R)-3-hydroxyacyl]-alpha-D-glucosamine = a lipid A disaccharide + UDP + H(+). It functions in the pathway bacterial outer membrane biogenesis; LPS lipid A biosynthesis. Functionally, condensation of UDP-2,3-diacylglucosamine and 2,3-diacylglucosamine-1-phosphate to form lipid A disaccharide, a precursor of lipid A, a phosphorylated glycolipid that anchors the lipopolysaccharide to the outer membrane of the cell. This is Lipid-A-disaccharide synthase from Sulfurihydrogenibium sp. (strain YO3AOP1).